A 408-amino-acid polypeptide reads, in one-letter code: COP9 signalosome complex subunit 4 (408 aa).

The 181-residue stretch at 194–374 folds into the PCI domain; the sequence is RIQDARRRFL…GIIYFESNTT (181 aa).

The protein belongs to the CSN4 family. In terms of assembly, component of the COP9 signalosome (CSN) complex.

The protein resides in the cytoplasm. It is found in the nucleus. Functionally, component of the COP9 signalosome (CSN) complex that acts as an regulator of the ubiquitin (Ubl) conjugation pathway by mediating the deneddylation of the cullin subunit of SCF-type E3 ubiquitin-protein ligase complexes. The CSN complex seems to link protein degradation to sexual development. Required for fruit body formation. This Emericella nidulans (strain FGSC A4 / ATCC 38163 / CBS 112.46 / NRRL 194 / M139) (Aspergillus nidulans) protein is COP9 signalosome complex subunit 4 (csnD).